A 486-amino-acid chain; its full sequence is Glutamate--tRNA ligase (486 aa).

The short motif at Pro11 to Asn21 is the 'HIGH' region element. The 'KMSKS' region motif lies at Lys255–Arg259. Position 258 (Lys258) interacts with ATP.

It belongs to the class-I aminoacyl-tRNA synthetase family. Glutamate--tRNA ligase type 1 subfamily. In terms of assembly, monomer.

The protein resides in the cytoplasm. It catalyses the reaction tRNA(Glu) + L-glutamate + ATP = L-glutamyl-tRNA(Glu) + AMP + diphosphate. In terms of biological role, catalyzes the attachment of glutamate to tRNA(Glu) in a two-step reaction: glutamate is first activated by ATP to form Glu-AMP and then transferred to the acceptor end of tRNA(Glu). The polypeptide is Glutamate--tRNA ligase (Streptococcus pneumoniae (strain Hungary19A-6)).